The chain runs to 947 residues: Serine-aspartate repeat-containing protein C (947 aa).

Positions 1 to 50 are cleaved as a signal peptide; it reads MNNKKTATNRKGMIPNRLNKFSIRKYSVGTASILVGTTLIFGLSGHEAKA. The segment at 51–164 is disordered; it reads AEHTNGELNQ…STTPKTTTIK (114 aa). Positions 51 to 495 are ligand binding A region; the sequence is AEHTNGELNQ…GSSTANGDQK (445 aa). Positions 56-71 are enriched in polar residues; it reads GELNQSKNETTAPSEN. Residues 72-83 show a composition bias toward basic and acidic residues; that stretch reads KTTKKVDSRQLK. Residues 84-155 are compositionally biased toward polar residues; it reads DNTQTATADQ…SNLTQAKDVS (72 aa). 2 CNA-B domains span residues 496 to 606 and 607 to 717; these read KYNL…YKTP and KYSL…EEET. Residues 678 to 927 form a disordered region; the sequence is TQTGTNTTED…NNSNNGTLFG (250 aa). Composition is skewed to acidic residues over residues 685–695 and 712–886; these read TEDDKDADGGE and YYEE…DSDS. Positions 910-914 match the LPXTG sorting signal motif; the sequence is LPETG. Over residues 912-927 the composition is skewed to low complexity; sequence ETGSENNNSNNGTLFG. A Pentaglycyl murein peptidoglycan amidated threonine modification is found at Thr913. The propeptide at 914–947 is removed by sortase; it reads GSENNNSNNGTLFGGLFAALGSLLLFGRRKKQNK.

This sequence belongs to the serine-aspartate repeat-containing protein (SDr) family. As to quaternary structure, homodimerizes; via N2-Domain. Interacts with host NRXN1; this interaction mediates bacterial attachment to host cells.

The protein localises to the secreted. It is found in the cell wall. Cell surface-associated calcium-binding protein which plays an important role in adhesion and pathogenesis. Mediates interactions with components of the extracellular matrix such as host NRXN1 to promote bacterial adhesion. This Staphylococcus aureus (strain USA300) protein is Serine-aspartate repeat-containing protein C (sdrC).